Here is a 199-residue protein sequence, read N- to C-terminus: MLAGGVPHGTVAFAYLAVVFAVTGINHLDGVADAGDAAVVHGDPADRRTVLKDTTTGVGAIAAVVVVVAGLVTGSLGVAALPTWTAVGVVVATEVGAKTSMAAVACLAHAPHDGLGSQFTGNATPGALPAVAGVALPVALASVPSPAAAGALAGAVGAGALTRRWLTGLLGGANGDVFGAVNEVSRVVGLHAGVVVWTL.

Helical transmembrane passes span 2–22 and 61–81; these read LAGGVPHGTVAFAYLAVVFAV and IAAVVVVVAGLVTGSLGVAAL.

This sequence belongs to the CobS family. Mg(2+) is required as a cofactor.

It localises to the cell membrane. The catalysed reaction is alpha-ribazole + adenosylcob(III)inamide-GDP = adenosylcob(III)alamin + GMP + H(+). The enzyme catalyses alpha-ribazole 5'-phosphate + adenosylcob(III)inamide-GDP = adenosylcob(III)alamin 5'-phosphate + GMP + H(+). It functions in the pathway cofactor biosynthesis; adenosylcobalamin biosynthesis; adenosylcobalamin from cob(II)yrinate a,c-diamide: step 7/7. Joins adenosylcobinamide-GDP and alpha-ribazole to generate adenosylcobalamin (Ado-cobalamin). Also synthesizes adenosylcobalamin 5'-phosphate from adenosylcobinamide-GDP and alpha-ribazole 5'-phosphate. The polypeptide is Adenosylcobinamide-GDP ribazoletransferase (Halobacterium salinarum (strain ATCC 700922 / JCM 11081 / NRC-1) (Halobacterium halobium)).